The sequence spans 293 residues: MATH domain and coiled-coil domain-containing protein At3g58400 (293 aa).

The MATH domain maps to 3–126 (RSRSQNLITE…NGELKIVAEI (124 aa)). Residues 227–285 (KLDWLENKLYEVAQKKEDDEAGETRLREMEEKLKDLKLKCSKMEALVEEEKAKVSAAKA) adopt a coiled-coil conformation.

The protein is MATH domain and coiled-coil domain-containing protein At3g58400 of Arabidopsis thaliana (Mouse-ear cress).